A 270-amino-acid chain; its full sequence is Release factor glutamine methyltransferase (270 aa).

S-adenosyl-L-methionine is bound by residues 113 to 117, aspartate 136, and asparagine 177; that span reads GTGSG. 177–180 contacts substrate; sequence NPPY.

This sequence belongs to the protein N5-glutamine methyltransferase family. PrmC subfamily.

The enzyme catalyses L-glutaminyl-[peptide chain release factor] + S-adenosyl-L-methionine = N(5)-methyl-L-glutaminyl-[peptide chain release factor] + S-adenosyl-L-homocysteine + H(+). Its function is as follows. Methylates the class 1 translation termination release factors RF1/PrfA and RF2/PrfB on the glutamine residue of the universally conserved GGQ motif. This Lactococcus lactis subsp. lactis (strain IL1403) (Streptococcus lactis) protein is Release factor glutamine methyltransferase.